The primary structure comprises 587 residues: Aspartate--tRNA ligase (587 aa).

Residue E174 coordinates L-aspartate. Residues 198–201 (QTFK) form an aspartate region. R220 contributes to the L-aspartate binding site. ATP contacts are provided by residues 220–222 (RDE) and Q229. H447 lines the L-aspartate pocket. An ATP-binding site is contributed by E481. R488 lines the L-aspartate pocket. 533–536 (GLDR) is a binding site for ATP.

This sequence belongs to the class-II aminoacyl-tRNA synthetase family. Type 1 subfamily. As to quaternary structure, homodimer.

It localises to the cytoplasm. It carries out the reaction tRNA(Asp) + L-aspartate + ATP = L-aspartyl-tRNA(Asp) + AMP + diphosphate. In terms of biological role, catalyzes the attachment of L-aspartate to tRNA(Asp) in a two-step reaction: L-aspartate is first activated by ATP to form Asp-AMP and then transferred to the acceptor end of tRNA(Asp). The protein is Aspartate--tRNA ligase of Porphyromonas gingivalis (strain ATCC BAA-308 / W83).